A 536-amino-acid polypeptide reads, in one-letter code: MVSIRDFTMPKKFVQMLVFNLTLTEVVLSGNVLIWPTDGSHWLNIKIILEELIQRNHNVTVLASSATLFINSNPDSPVNFEVIPVSYKKSNIDSLIEHMIMLWIDHRPTPLTIWAFYKELGKLLDTFFQINIQLCDGVLKNPKLMARLQKGGFDVLVADPVTICGDLVALKLGIPFMYTLRFSPASTVERHCGKIPAPVSYVPAALSELTDQMTFGERIKNTISYSLQDYIFQSYWGEWNSYYSKILGRPTTLCETMGKAEIWLIRTYWDFEFPRPYLPNFEFVGGLHCKPAKPLPKEMEEFIQSSGKNGVVVFSLGSMVKNLTEEKANLIASALAQIPQKVLWRYKGKKPATLGNNTQLFDWIPQNDLLGHPKTKAFITHGGTNGIYEAIYHGVPMVGVPMFADQPDNIAHMKAKGAAVEVNLNTMTSVDLLSALRTVINEPSYKENAMRLSRIHHDQPVKPLDRAVFWIEFVMRHKGAKHLRVAAHDLTWFQYHSLDVIGFLLVCVTTAIFLVIQCCLFSCQKFGKIGKKKKRE.

The Cytoplasmic portion of the chain corresponds to 1-15; sequence MVSIRDFTMPKKFVQ. Residues 16-36 form a helical membrane-spanning segment; that stretch reads MLVFNLTLTEVVLSGNVLIWP. Residues 37–500 are Lumenal-facing; that stretch reads TDGSHWLNIK…TWFQYHSLDV (464 aa). N-linked (GlcNAc...) asparagine glycans are attached at residues Asn-58, Asn-322, and Asn-356. A helical membrane pass occupies residues 501–521; it reads IGFLLVCVTTAIFLVIQCCLF. The Cytoplasmic portion of the chain corresponds to 522–536; sequence SCQKFGKIGKKKKRE.

Belongs to the UDP-glycosyltransferase family. Mainly expressed in the nasal mucosa.

The protein localises to the endoplasmic reticulum membrane. The enzyme catalyses glucuronate acceptor + UDP-alpha-D-glucuronate = acceptor beta-D-glucuronoside + UDP + H(+). The catalysed reaction is 17alpha-estradiol + UDP-alpha-D-glucuronate = 17alpha-estradiol 3-O-(beta-D-glucuronate) + UDP + H(+). It catalyses the reaction 17beta-estradiol + UDP-alpha-D-glucuronate = 17beta-estradiol 3-O-(beta-D-glucuronate) + UDP + H(+). It carries out the reaction chenodeoxycholate + UDP-alpha-D-glucuronate = chenodeoxycholoyl-24-O-(beta-D-glucuronate) + UDP. The enzyme catalyses lithocholate + UDP-alpha-D-glucuronate = lithocholoyl-24-O-(beta-D-glucuronate) + UDP. The catalysed reaction is deoxycholate + UDP-alpha-D-glucuronate = deoxycholoyl-24-O-(beta-D-glucuronate) + UDP. It catalyses the reaction hyocholate + UDP-alpha-D-glucuronate = hyocholoyl-24-O-(beta-D-glucuronate) + UDP. It carries out the reaction hyodeoxycholate + UDP-alpha-D-glucuronate = hyodeoxycholate 6-O-(beta-D-glucuronate) + UDP + H(+). Its function is as follows. UDP-glucuronosyltransferase (UGT) that catalyzes phase II biotransformation reactions in which lipophilic substrates are conjugated with glucuronic acid to increase the metabolite's water solubility, thereby facilitating excretion into either the urine or bile. Essential for the elimination and detoxification of drugs, xenobiotics and endogenous compounds. Catalyzes the glucuronidation of endogenous estrogen hormone estradiol. Contributes to bile acid (BA) detoxification by catalyzing the glucuronidation of BA substrates, which are natural detergents for dietary lipids absorption. Shows a potential role in detoxification of toxic waste compounds in the amniotic fluid before birth, and air-born chemical after birth. In Homo sapiens (Human), this protein is UDP-glucuronosyltransferase 2A2.